We begin with the raw amino-acid sequence, 240 residues long: Probable Ni/Fe-hydrogenase B-type cytochrome subunit (240 aa).

The next 4 membrane-spanning stretches (helical) occupy residues 31 to 51 (LWHWVTALSIVVLGVTGYFIG), 75 to 95 (FAAGYVLAIGFLGRVYWAFVG), 142 to 163 (LAMFCFFVIGAVFMSVTGFALY), and 196 to 213 (LGMWYLVVFVMIHVYLAA).

This sequence belongs to the HupC/HyaC/HydC family.

It localises to the cell membrane. Functionally, probable b-type cytochrome. The protein is Probable Ni/Fe-hydrogenase B-type cytochrome subunit (hupZ) of Azotobacter chroococcum mcd 1.